The primary structure comprises 1921 residues: Mediator of RNA polymerase II transcription subunit 13 (1921 aa).

Glycyl lysine isopeptide (Lys-Gly) (interchain with G-Cter in ubiquitin) cross-links involve residues K220 and K226. Disordered regions lie at residues 400–434, 702–724, and 1485–1528; these read YEKN…TSRT, TQVE…NSST, and SPTF…GDVS. Positions 407–427 are enriched in low complexity; the sequence is SSGSSRNSSISSTSSASSGSG. Composition is skewed to polar residues over residues 1486 to 1496 and 1515 to 1527; these read PTFTSLGSESS and EGIT…QGDV.

The protein belongs to the Mediator complex subunit 13 family. In terms of assembly, component of the Mediator complex. Interacts with CYCC1-2 (CDK8 homolog). As to expression, ubiquitous. Highest expression in the shoot apex.

The protein resides in the nucleus. Component of the Mediator complex, a coactivator involved in the regulated transcription of nearly all RNA polymerase II-dependent genes. Mediator functions as a bridge to convey information from gene-specific regulatory proteins to the basal RNA polymerase II transcription machinery. The Mediator complex, having a compact conformation in its free form, is recruited to promoters by direct interactions with regulatory proteins and serves for the assembly of a functional preinitiation complex with RNA polymerase II and the general transcription factors. Acts closely together with MAB12. Involved in the regulation of embryo patterning and cotyledon organogenesis. May act through transient repression of specific genes such as the ones responsive to auxin. The sequence is that of Mediator of RNA polymerase II transcription subunit 13 (MED13) from Arabidopsis thaliana (Mouse-ear cress).